The primary structure comprises 131 residues: Auxin-responsive protein SAUR77 (131 aa).

The protein belongs to the ARG7 family.

May be involved in the regulation of ethylene receptor signaling. Promotes cell expansion and plant growth. This is Auxin-responsive protein SAUR77 from Arabidopsis thaliana (Mouse-ear cress).